A 415-amino-acid chain; its full sequence is Mitogen-activated protein kinase mpkC (415 aa).

A Protein kinase domain is found at 20–299; the sequence is YANLQPVGLG…AEQGLMHPWM (280 aa). ATP-binding positions include 26 to 34 and lysine 49; that span reads VGLGTAGVV. Aspartate 141 acts as the Proton acceptor in catalysis. Position 171 is a phosphothreonine (threonine 171). The short motif at 171 to 173 is the TXY element; the sequence is TGY. The residue at position 173 (tyrosine 173) is a Phosphotyrosine.

Belongs to the protein kinase superfamily. Ser/Thr protein kinase family. MAP kinase subfamily. HOG1 sub-subfamily. The cofactor is Mg(2+). Dually phosphorylated on Thr-171 and Tyr-173, which activates the enzyme.

The catalysed reaction is L-seryl-[protein] + ATP = O-phospho-L-seryl-[protein] + ADP + H(+). It carries out the reaction L-threonyl-[protein] + ATP = O-phospho-L-threonyl-[protein] + ADP + H(+). Its activity is regulated as follows. Activated by tyrosine and threonine phosphorylation. Its function is as follows. Mitogen-activated protein kinase required for growth on media where sorbitol or mannitol is the sole carbon source. The sequence is that of Mitogen-activated protein kinase mpkC (mpkC) from Emericella nidulans (strain FGSC A4 / ATCC 38163 / CBS 112.46 / NRRL 194 / M139) (Aspergillus nidulans).